The sequence spans 386 residues: MKIHEYQGKEIFRKYGVPTPKGILAVSANDAEAAAKELGTSVVVVKAQIHAGGRGKGGGVKLAKSPAEAKELAKQMLGMKLKTIQTGPEGQTVHKVYIEEGLAIGQELYLGVTLDRATSRITFMASREGGVEIEEVAEKHPEKILRESVDPAVGFQDFQGRKLAFGLGLTGPTVNKFTQFCSALYRMFMDTDASLVEINPLVILKDGGVVALDAKVTFDENALYRHKDLLEYRDLAEEEPREIQAKEWDLAYIALDGNIGCMVNGAGLAMATMDTIKLVGGSPANFLDVGGGANKEKVTAAFKLILADPAVKAVLVNIFGGIMKCDVIAEGIIAAAKEVQLKVPLVVRLEGTNVEKGKELLSNSGLAITPADNLRQAAEKAVAAVK.

Positions 9-244 (KEIFRKYGVP…LAEEEPREIQ (236 aa)) constitute an ATP-grasp domain. Residues Lys-46, 53–55 (GRG), Glu-99, Leu-102, and Glu-107 each bind ATP. Mg(2+)-binding residues include Asn-199 and Asp-213. Substrate is bound by residues Asn-264 and 321-323 (GIM).

This sequence belongs to the succinate/malate CoA ligase beta subunit family. Heterotetramer of two alpha and two beta subunits. Mg(2+) serves as cofactor.

It carries out the reaction succinate + ATP + CoA = succinyl-CoA + ADP + phosphate. The enzyme catalyses GTP + succinate + CoA = succinyl-CoA + GDP + phosphate. Its pathway is carbohydrate metabolism; tricarboxylic acid cycle; succinate from succinyl-CoA (ligase route): step 1/1. In terms of biological role, succinyl-CoA synthetase functions in the citric acid cycle (TCA), coupling the hydrolysis of succinyl-CoA to the synthesis of either ATP or GTP and thus represents the only step of substrate-level phosphorylation in the TCA. The beta subunit provides nucleotide specificity of the enzyme and binds the substrate succinate, while the binding sites for coenzyme A and phosphate are found in the alpha subunit. This is Succinate--CoA ligase [ADP-forming] subunit beta from Myxococcus xanthus (strain DK1622).